An 81-amino-acid polypeptide reads, in one-letter code: Acyl carrier protein (81 aa).

One can recognise a Carrier domain in the interval 5 to 80; the sequence is EEIFSKVKSI…DIVSYIEKKL (76 aa). Residue Ser-40 is modified to O-(pantetheine 4'-phosphoryl)serine.

This sequence belongs to the acyl carrier protein (ACP) family. 4'-phosphopantetheine is transferred from CoA to a specific serine of apo-ACP by AcpS. This modification is essential for activity because fatty acids are bound in thioester linkage to the sulfhydryl of the prosthetic group.

The protein resides in the cytoplasm. It participates in lipid metabolism; fatty acid biosynthesis. Its function is as follows. Carrier of the growing fatty acid chain in fatty acid biosynthesis. This chain is Acyl carrier protein, found in Thermotoga maritima (strain ATCC 43589 / DSM 3109 / JCM 10099 / NBRC 100826 / MSB8).